Consider the following 405-residue polypeptide: NAC transcription factor NAM-A1 (405 aa).

The segment covering 1–10 (MGSSDSSSGS) has biased composition (low complexity). Positions 1 to 38 (MGSSDSSSGSAQKAARHQHEPPPPRQRGSAPELPPGFR) are disordered. Residues 33 to 204 (LPPGFRFHPT…DWVLCRIYKK (172 aa)) form the NAC domain. The DNA-binding element occupies 137 to 210 (LGVKKALVFY…IYKKINKAAA (74 aa)).

Expressed in flag leaves, green spikes and peduncles.

Its subcellular location is the nucleus. Functionally, transcription factor of the NAC family associated with the grain protein content (GPC). Accelerates senescence and increases nutrient remobilization from leaves to developing grains. The tetraploid cultivated wheat (T.durum) contains one additional gene coding for a functional protein (NAM-B2) and one extra pseudogene (NAM-B1). In Triticum turgidum subsp. durum (Durum wheat), this protein is NAC transcription factor NAM-A1 (NAM-A1).